A 292-amino-acid polypeptide reads, in one-letter code: MAVPTELDGGSVKETAAEEESRVLAPGAAPFGNFPHYSRFHPPEQRLRLLPPELLRQLFPESPENGPILGLDVGCNSGDLSVALYKHFLSLPDGETCSDASREFRLLCCDIDPVLVKRAEKECPFPDALTFITLDFMNQRTRKVLLSSFLSQFGRSVFDIGFCMSITMWIHLNHGDHGLWEFLAHLSSLCHYLLVEPQPWKCYRAAARRLRKLGLHDFDHFHSLAIRGDMPNQIVQILTQDHGMELICCFGNTSWDRSLLLFRAKQTIETHPIPESLIEKGKEKNRLSFQKQ.

The disordered stretch occupies residues 1–21 (MAVPTELDGGSVKETAAEEES). S-adenosyl-L-methionine is bound by residues R46, N76, D110, 135–136 (DF), and M164. The Bin3-type SAM domain occupies 53–274 (ELLRQLFPES…KQTIETHPIP (222 aa)).

The protein belongs to the methyltransferase superfamily. As to quaternary structure, interacts with DICER1; the interaction may be mediated by RNA.

It is found in the cytoplasm. It carries out the reaction a 5'-end 5'-phospho-ribonucleoside-RNA + S-adenosyl-L-methionine = a 5'-end (5'-methylphospho)-ribonucleoside-RNA + S-adenosyl-L-homocysteine. It catalyses the reaction a 5'-end 5'-phospho-ribonucleoside-RNA + 2 S-adenosyl-L-methionine = a 5'-end (5'-bismethylphospho)-ribonucleoside-RNA + 2 S-adenosyl-L-homocysteine. Its function is as follows. O-methyltransferase that specifically monomethylates 5'-monophosphate of cytoplasmic histidyl tRNA (tRNA(His)), acting as a capping enzyme by protecting tRNA(His) from cleavage by DICER1. Also able, with less efficiently, to methylate the 5' monophosphate of a subset of pre-miRNAs, acting as a negative regulator of miRNA processing. The 5' monophosphate of pre-miRNAs is recognized by DICER1 and is required for pre-miRNAs processing: methylation at this position reduces the processing of pre-miRNAs by DICER1. Was also reported to mediate dimethylation of pre-miR-145; however dimethylation cannot be reproduced by another group which observes a monomethylation of pre-miR-145. This is RNA 5'-monophosphate methyltransferase from Homo sapiens (Human).